Here is a 192-residue protein sequence, read N- to C-terminus: Pyridoxal 5'-phosphate synthase subunit PdxT (192 aa).

53–55 (GES) contacts L-glutamine. Cysteine 82 functions as the Nucleophile in the catalytic mechanism. L-glutamine contacts are provided by residues arginine 108 and 134-135 (IR). Residues histidine 170 and glutamate 172 each act as charge relay system in the active site.

It belongs to the glutaminase PdxT/SNO family. As to quaternary structure, in the presence of PdxS, forms a dodecamer of heterodimers. Only shows activity in the heterodimer.

It catalyses the reaction aldehydo-D-ribose 5-phosphate + D-glyceraldehyde 3-phosphate + L-glutamine = pyridoxal 5'-phosphate + L-glutamate + phosphate + 3 H2O + H(+). The catalysed reaction is L-glutamine + H2O = L-glutamate + NH4(+). It participates in cofactor biosynthesis; pyridoxal 5'-phosphate biosynthesis. In terms of biological role, catalyzes the hydrolysis of glutamine to glutamate and ammonia as part of the biosynthesis of pyridoxal 5'-phosphate. The resulting ammonia molecule is channeled to the active site of PdxS. The polypeptide is Pyridoxal 5'-phosphate synthase subunit PdxT (Methanothermobacter thermautotrophicus (strain ATCC 29096 / DSM 1053 / JCM 10044 / NBRC 100330 / Delta H) (Methanobacterium thermoautotrophicum)).